Here is a 238-residue protein sequence, read N- to C-terminus: Probable RNA/DNA demethylase ALKBH6 (238 aa).

The Fe2OG dioxygenase domain maps to 96–227; it reads PANHVLVNQY…RVSLTIRRVP (132 aa). Asn-103 and Tyr-105 together coordinate 2-oxoglutarate. Positions 114 and 116 each coordinate Fe cation. Positions 138–161 are disordered; that stretch reads YEPRRPEDDDPTEQPRPPPRPTTS. Position 182 (His-182) interacts with Fe cation. Residues Arg-218 and Ser-220 each coordinate 2-oxoglutarate.

This sequence belongs to the alkB family. As to quaternary structure, interacts with VCPKMT. It depends on Fe(2+) as a cofactor. As to expression, widely expressed, with highest expression in testis and pancreas.

It is found in the cytoplasm. The protein resides in the nucleus. In terms of biological role, probable Fe(2+)/2-oxoglutarate-dependent dioxygenase involved in oxidative demethylation of nucleic acids. Binds nucleic acids with a preference for ssDNA or ssRNA to other types of DNAs. May play a role in nucleic acid damage repair. The polypeptide is Probable RNA/DNA demethylase ALKBH6 (Homo sapiens (Human)).